The chain runs to 123 residues: Large ribosomal subunit protein uL14 (123 aa).

This sequence belongs to the universal ribosomal protein uL14 family. Part of the 50S ribosomal subunit. Forms a cluster with proteins L3 and L19. In the 70S ribosome, L14 and L19 interact and together make contacts with the 16S rRNA in bridges B5 and B8.

Its function is as follows. Binds to 23S rRNA. Forms part of two intersubunit bridges in the 70S ribosome. This chain is Large ribosomal subunit protein uL14, found in Hamiltonella defensa subsp. Acyrthosiphon pisum (strain 5AT).